A 474-amino-acid chain; its full sequence is Siroheme synthase (474 aa).

Positions 1 to 203 (MKLFPLFADL…QRPEEAERLL (203 aa)) are precorrin-2 dehydrogenase /sirohydrochlorin ferrochelatase. Residues 22-23 (EI) and 43-44 (PA) contribute to the NAD(+) site. At Ser-128 the chain carries Phosphoserine. Positions 216–474 (GSVVLVGAGP…QRPAPAALAA (259 aa)) are uroporphyrinogen-III C-methyltransferase. Position 225 (Pro-225) interacts with S-adenosyl-L-methionine. The active-site Proton acceptor is Asp-248. The Proton donor role is filled by Lys-270. S-adenosyl-L-methionine is bound by residues 302–304 (GGD), Ile-307, 332–333 (TA), Met-384, and Gly-413.

It in the N-terminal section; belongs to the precorrin-2 dehydrogenase / sirohydrochlorin ferrochelatase family. The protein in the C-terminal section; belongs to the precorrin methyltransferase family.

The enzyme catalyses uroporphyrinogen III + 2 S-adenosyl-L-methionine = precorrin-2 + 2 S-adenosyl-L-homocysteine + H(+). It catalyses the reaction precorrin-2 + NAD(+) = sirohydrochlorin + NADH + 2 H(+). The catalysed reaction is siroheme + 2 H(+) = sirohydrochlorin + Fe(2+). The protein operates within cofactor biosynthesis; adenosylcobalamin biosynthesis; precorrin-2 from uroporphyrinogen III: step 1/1. Its pathway is cofactor biosynthesis; adenosylcobalamin biosynthesis; sirohydrochlorin from precorrin-2: step 1/1. It participates in porphyrin-containing compound metabolism; siroheme biosynthesis; precorrin-2 from uroporphyrinogen III: step 1/1. It functions in the pathway porphyrin-containing compound metabolism; siroheme biosynthesis; siroheme from sirohydrochlorin: step 1/1. The protein operates within porphyrin-containing compound metabolism; siroheme biosynthesis; sirohydrochlorin from precorrin-2: step 1/1. Its function is as follows. Multifunctional enzyme that catalyzes the SAM-dependent methylations of uroporphyrinogen III at position C-2 and C-7 to form precorrin-2 via precorrin-1. Then it catalyzes the NAD-dependent ring dehydrogenation of precorrin-2 to yield sirohydrochlorin. Finally, it catalyzes the ferrochelation of sirohydrochlorin to yield siroheme. The chain is Siroheme synthase from Bordetella petrii (strain ATCC BAA-461 / DSM 12804 / CCUG 43448).